Reading from the N-terminus, the 265-residue chain is H-2 class II histocompatibility antigen, A beta chain (265 aa).

The N-terminal stretch at 1-27 (MALQIPSLLLSAAVVVLMVLSSPGTEG) is a signal peptide. A beta-1 region spans residues 28-122 (GDSERHFVYQ…PETHTSLRRL (95 aa)). Residues 28 to 226 (GDSERHFVYQ…RAQSESAWSK (199 aa)) lie on the Extracellular side of the membrane. 2 disulfide bridges follow: Cys42/Cys106 and Cys145/Cys201. The N-linked (GlcNAc...) asparagine glycan is linked to Asn46. Positions 123 to 216 (EQPNVVISLS…SLKSPITVEW (94 aa)) are beta-2. The Ig-like C1-type domain occupies 125 to 213 (PNVVISLSRT…EHPSLKSPIT (89 aa)). Residues 217-226 (RAQSESAWSK) form a connecting peptide region. A helical transmembrane segment spans residues 227 to 247 (MLSGIGGCVLGVIFLGLGLFI). The Cytoplasmic segment spans residues 248–265 (RHRSQKGPRGPPPAGLLQ).

This sequence belongs to the MHC class II family. In terms of processing, ubiquitinated in immature dendritic cells leading to down-regulation of MHC class II.

It localises to the membrane. In Mus musculus (Mouse), this protein is H-2 class II histocompatibility antigen, A beta chain (H2-Ab1).